Reading from the N-terminus, the 102-residue chain is Small ribosomal subunit protein uS10 (102 aa).

Belongs to the universal ribosomal protein uS10 family. In terms of assembly, part of the 30S ribosomal subunit.

Its function is as follows. Involved in the binding of tRNA to the ribosomes. The sequence is that of Small ribosomal subunit protein uS10 from Halalkalibacterium halodurans (strain ATCC BAA-125 / DSM 18197 / FERM 7344 / JCM 9153 / C-125) (Bacillus halodurans).